Reading from the N-terminus, the 131-residue chain is Protein FAM107B (131 aa).

Ala-2 carries the N-acetylalanine modification. Residues 39–79 (MNQKRGLAPQNKPELQKVMEKRRRDQVIKQKEEEAQKKKSD) are disordered. The residue at position 50 (Lys-50) is an N6-acetyllysine. Residues 52-79 (ELQKVMEKRRRDQVIKQKEEEAQKKKSD) show a composition bias toward basic and acidic residues. Residues 61 to 112 (RRDQVIKQKEEEAQKKKSDLEIELLKRQQKLEQLELEKQKLQEEQENAPEFV) adopt a coiled-coil conformation.

The protein belongs to the FAM107 family. As to expression, expressed in the hippocampus and hypothalamus. Expressed in the pontine nuclei and reticulotegmental nucleus. Expressed in Purkinje cell and nuclear layers of the cerebelum. Expressed in the choroid plexus. Expressed in hippocampal granule neurons of the dente gyrus.

The polypeptide is Protein FAM107B (Mus musculus (Mouse)).